The primary structure comprises 153 residues: Satratoxin biosynthesis SC2 cluster transcription factor SAT15 (153 aa).

Its subcellular location is the nucleus. Transcriptional regulator that may regulate the expression of the satratoxin biosynthesis SC2 cluster, one of the 3 clusters involved in the biosynthesis of satratoxins, trichothecene mycotoxins that are associated with human food poisonings. The chain is Satratoxin biosynthesis SC2 cluster transcription factor SAT15 from Stachybotrys chartarum (strain CBS 109288 / IBT 7711) (Toxic black mold).